The following is a 545-amino-acid chain: Hydroxylamine reductase (545 aa).

Positions 3, 6, 15, and 21 each coordinate [4Fe-4S] cluster. Residues H241, E265, C309, C396, C424, C449, E483, and K485 each coordinate hybrid [4Fe-2O-2S] cluster. C396 carries the post-translational modification Cysteine persulfide.

It belongs to the HCP family. The cofactor is [4Fe-4S] cluster. It depends on hybrid [4Fe-2O-2S] cluster as a cofactor.

It localises to the cytoplasm. It catalyses the reaction A + NH4(+) + H2O = hydroxylamine + AH2 + H(+). Its function is as follows. Catalyzes the reduction of hydroxylamine to form NH(3) and H(2)O. This is Hydroxylamine reductase from Zymomonas mobilis subsp. mobilis (strain ATCC 31821 / ZM4 / CP4).